We begin with the raw amino-acid sequence, 204 residues long: Ribonuclease HII (204 aa).

Residues 17-204 (QLVAGVDEVG…KPVQQLLQGD (188 aa)) form the RNase H type-2 domain. Residues Asp23, Glu24, and Asp115 each contribute to the a divalent metal cation site.

This sequence belongs to the RNase HII family. Mn(2+) is required as a cofactor. Requires Mg(2+) as cofactor.

Its subcellular location is the cytoplasm. The enzyme catalyses Endonucleolytic cleavage to 5'-phosphomonoester.. In terms of biological role, endonuclease that specifically degrades the RNA of RNA-DNA hybrids. The chain is Ribonuclease HII from Hahella chejuensis (strain KCTC 2396).